A 226-amino-acid chain; its full sequence is ATP-dependent dethiobiotin synthetase BioD (226 aa).

Residue 14–19 (GIGKTF) coordinates ATP. Residue threonine 18 coordinates Mg(2+). Residue lysine 39 is part of the active site. Serine 43 is a substrate binding site. ATP contacts are provided by residues aspartate 56, 117 to 120 (EGVG), 177 to 178 (NT), 206 to 208 (PHI), and asparagine 213. The Mg(2+) site is built by aspartate 56 and glutamate 117.

Belongs to the dethiobiotin synthetase family. As to quaternary structure, homodimer. Mg(2+) serves as cofactor.

The protein resides in the cytoplasm. It catalyses the reaction (7R,8S)-7,8-diammoniononanoate + CO2 + ATP = (4R,5S)-dethiobiotin + ADP + phosphate + 3 H(+). It functions in the pathway cofactor biosynthesis; biotin biosynthesis; biotin from 7,8-diaminononanoate: step 1/2. In terms of biological role, catalyzes a mechanistically unusual reaction, the ATP-dependent insertion of CO2 between the N7 and N8 nitrogen atoms of 7,8-diaminopelargonic acid (DAPA, also called 7,8-diammoniononanoate) to form a ureido ring. This is ATP-dependent dethiobiotin synthetase BioD from Xylella fastidiosa (strain M12).